The chain runs to 375 residues: Probable peptidoglycan glycosyltransferase FtsW (375 aa).

At 1 to 16 the chain is on the cytoplasmic side; the sequence is MNLNFKLNLKEIERYD. A helical membrane pass occupies residues 17–37; that stretch reads LVILLMAVALTCFGVVMVYSA. The Periplasmic segment spans residues 38–49; sequence SSVMATKKFHDG. The chain crosses the membrane as a helical span at residues 50-70; it reads FYFLKRQGIYAILGCAAMIVA. The Cytoplasmic portion of the chain corresponds to 71–81; the sequence is MRIDYRQWREY. A helical transmembrane segment spans residues 82–102; that stretch reads AVPILLGCLLLLLLVFIPGIG. The Periplasmic segment spans residues 103–145; it reads GAAKGASRWIRFPGFNLQPSELAKIALIMYMAYSLDKKQEKVK. A helical transmembrane segment spans residues 146-166; sequence FFSTGFAPYMVLLAILLAILL. At 167-169 the chain is on the cytoplasmic side; sequence KQH. A helical membrane pass occupies residues 170–190; the sequence is DLGSALTMGGVAILMLFAAGT. Topologically, residues 191–193 are periplasmic; sequence RPR. A helical membrane pass occupies residues 194-214; the sequence is YILGMVVLTLPFLYFLVMNVD. At 215 to 233 the chain is on the cytoplasmic side; the sequence is YRRRRILAYLNPWEDPTNT. The chain crosses the membrane as a helical span at residues 234–254; that stretch reads GFQIIQSWLAFGNGGIIGQGL. Residues 255–279 lie on the Periplasmic side of the membrane; sequence GEGKQKMFFLPEAHTDFILSVVGEE. Residues 280 to 300 form a helical membrane-spanning segment; sequence LGLIGVIVIAAMFLMLVLRGV. Over 301–312 the chain is Cytoplasmic; the sequence is RVALMAQDPFGR. Residues 313–333 form a helical membrane-spanning segment; that stretch reads FLAFGIVTLLGIQAFVNMGVV. The Periplasmic segment spans residues 334–343; sequence TGLLPTKGLA. The chain crosses the membrane as a helical span at residues 344–364; it reads LPFISYGGSSLIVTLFAVGIL. Over 365–375 the chain is Cytoplasmic; the sequence is LNVSTRMKGTP.

It belongs to the SEDS family. FtsW subfamily.

The protein localises to the cell inner membrane. The enzyme catalyses [GlcNAc-(1-&gt;4)-Mur2Ac(oyl-L-Ala-gamma-D-Glu-L-Lys-D-Ala-D-Ala)](n)-di-trans,octa-cis-undecaprenyl diphosphate + beta-D-GlcNAc-(1-&gt;4)-Mur2Ac(oyl-L-Ala-gamma-D-Glu-L-Lys-D-Ala-D-Ala)-di-trans,octa-cis-undecaprenyl diphosphate = [GlcNAc-(1-&gt;4)-Mur2Ac(oyl-L-Ala-gamma-D-Glu-L-Lys-D-Ala-D-Ala)](n+1)-di-trans,octa-cis-undecaprenyl diphosphate + di-trans,octa-cis-undecaprenyl diphosphate + H(+). Its pathway is cell wall biogenesis; peptidoglycan biosynthesis. Peptidoglycan polymerase that is essential for cell division. The polypeptide is Probable peptidoglycan glycosyltransferase FtsW (Geobacter metallireducens (strain ATCC 53774 / DSM 7210 / GS-15)).